The primary structure comprises 87 residues: uncharacterized protein (87 aa).

An N-terminal signal peptide occupies residues 1–26 (MMSTQHFILSLTILIIISNLHDEVNA). Intrachain disulfides connect cysteine 61–cysteine 75, cysteine 68–cysteine 79, and cysteine 74–cysteine 84.

Its subcellular location is the secreted. This is an uncharacterized protein from Schistosoma japonicum (Blood fluke).